The following is a 282-amino-acid chain: Phosphatidylserine decarboxylase proenzyme (282 aa).

Catalysis depends on charge relay system; for autoendoproteolytic cleavage activity residues Asp-88, His-145, and Ser-248. Ser-248 functions as the Schiff-base intermediate with substrate; via pyruvic acid; for decarboxylase activity in the catalytic mechanism. Ser-248 carries the post-translational modification Pyruvic acid (Ser); by autocatalysis.

It belongs to the phosphatidylserine decarboxylase family. PSD-B subfamily. Prokaryotic type I sub-subfamily. In terms of assembly, heterodimer of a large membrane-associated beta subunit and a small pyruvoyl-containing alpha subunit. Pyruvate serves as cofactor. Is synthesized initially as an inactive proenzyme. Formation of the active enzyme involves a self-maturation process in which the active site pyruvoyl group is generated from an internal serine residue via an autocatalytic post-translational modification. Two non-identical subunits are generated from the proenzyme in this reaction, and the pyruvate is formed at the N-terminus of the alpha chain, which is derived from the carboxyl end of the proenzyme. The autoendoproteolytic cleavage occurs by a canonical serine protease mechanism, in which the side chain hydroxyl group of the serine supplies its oxygen atom to form the C-terminus of the beta chain, while the remainder of the serine residue undergoes an oxidative deamination to produce ammonia and the pyruvoyl prosthetic group on the alpha chain. During this reaction, the Ser that is part of the protease active site of the proenzyme becomes the pyruvoyl prosthetic group, which constitutes an essential element of the active site of the mature decarboxylase.

It is found in the cell membrane. The enzyme catalyses a 1,2-diacyl-sn-glycero-3-phospho-L-serine + H(+) = a 1,2-diacyl-sn-glycero-3-phosphoethanolamine + CO2. It functions in the pathway phospholipid metabolism; phosphatidylethanolamine biosynthesis; phosphatidylethanolamine from CDP-diacylglycerol: step 2/2. Catalyzes the formation of phosphatidylethanolamine (PtdEtn) from phosphatidylserine (PtdSer). This Dechloromonas aromatica (strain RCB) protein is Phosphatidylserine decarboxylase proenzyme.